A 438-amino-acid chain; its full sequence is DNA primase DnaG (438 aa).

Positions 169–243 constitute a Toprim domain; sequence DSIIVVEGRA…DIDYVARAPY (75 aa). Mg(2+) contacts are provided by Glu-175, Asp-217, and Asp-219.

Belongs to the archaeal DnaG primase family. In terms of assembly, forms a ternary complex with MCM helicase and DNA. Mg(2+) is required as a cofactor.

It catalyses the reaction ssDNA + n NTP = ssDNA/pppN(pN)n-1 hybrid + (n-1) diphosphate.. Its function is as follows. RNA polymerase that catalyzes the synthesis of short RNA molecules used as primers for DNA polymerase during DNA replication. In Methanococcus maripaludis (strain C6 / ATCC BAA-1332), this protein is DNA primase DnaG.